Consider the following 275-residue polypeptide: Two-component response regulator PprB (275 aa).

The 119-residue stretch at 10 to 128 (SVLIIDDEPQ…ELLHGLERLE (119 aa)) folds into the Response regulatory domain. Asp60 bears the 4-aspartylphosphate mark. The tract at residues 173–205 (SQPSALRSEDSQPSAPPAPVAESQVSPSNPLFG) is disordered. One can recognise an HTH luxR-type domain in the interval 200 to 265 (SNPLFGKLSP…QLALALSPAA (66 aa)). The H-T-H motif DNA-binding region spans 224–243 (NYQIAYELGITENTVKLYVS).

In terms of processing, phosphorylated by PprA.

Member of the two-component regulatory system PprA/PprB involved in biofilm formation by controlling the expression of many related genes including type IVb pili major subunit flp pilin, adhesin bapA or cupE fimbriae. Functions as a transcription regulator by direct binding to promoter regions. Negatively regulates its own transcription. This chain is Two-component response regulator PprB, found in Pseudomonas aeruginosa (strain ATCC 15692 / DSM 22644 / CIP 104116 / JCM 14847 / LMG 12228 / 1C / PRS 101 / PAO1).